The chain runs to 72 residues: GFYFRSIQGFYFKRIQGNICSEPKKVGRCRESFPRFYFDSETGKCTPFIYGGCGGNGNNFETLHACRAICRA.

The signal sequence occupies residues 1–9 (GFYFRSIQG). Positions 10–17 (FYFKRIQG) are excised as a propeptide. In terms of domain architecture, BPTI/Kunitz inhibitor spans 20-70 (CSEPKKVGRCRESFPRFYFDSETGKCTPFIYGGCGGNGNNFETLHACRAIC). Disulfide bonds link Cys20/Cys70, Cys29/Cys53, and Cys45/Cys66.

It belongs to the venom Kunitz-type family. Sea anemone type 2 potassium channel toxin subfamily.

Its subcellular location is the secreted. The protein resides in the nematocyst. Functionally, serine protease inhibitor that acts on trypsin (Ki=190 nM) and to elastase. Does not bind to alpha-chymotrypsin, cathepsin G, and kallikrein. It significantly increases neuroblastoma cell viability in an in vitro neurotoxicity model, being a consequence of an effective decrease of reactive oxygen species (ROS) level in the cells. It also protects cells by inhibiting ATP-induced purinoceptor activation. Its binding affinity to P2RX7 is moderate (Kd=45.5 uM). This Radianthus crispa (Leathery sea anemone) protein is PI-stichotoxin-Hcr2j.